The following is a 1711-amino-acid chain: Reverse gyrase (1711 aa).

The RG N-terminal-type zinc finger occupies 1–39 (MKAVYREMCPNCWGRISDERLVMRNPCEECLDEPVHADS). The Zn(2+) site is built by cysteine 9, cysteine 12, cysteine 27, and cysteine 30. Residues glutamine 89 and 106–113 (APTGMGKS) each bind ATP. Residues 93–256 (VKRLLKGRSF…RLKKQMSRYL (164 aa)) form the Helicase ATP-binding domain. The short motif at 213-216 (DDVD) is the DEAD box element. The segment at 638–1711 (DLVRSALMIV…YSEIQRYVSG (1074 aa)) is topoisomerase I. One can recognise a Toprim domain in the interval 642–805 (SALMIVESPN…NIKRIEFHEV (164 aa)). Glutamate 648 contributes to the Mg(2+) binding site. The segment at 722–751 (LKRCRDCGHQFVDWEKKGVCPRCGSTNVRD) adopts an RG C-terminal-type zinc-finger fold. Zn(2+) is bound by residues cysteine 725, cysteine 728, cysteine 741, and cysteine 744. Mg(2+) is bound at residue aspartate 774. One can recognise a Topo IA-type catalytic domain in the interval 821-1709 (NENRVNAQIV…ELYSEIQRYV (889 aa)). The DOD-type homing endonuclease domain maps to 1160 to 1287 (VFGLVLGDGT…LSVYLYQIGI (128 aa)). Catalysis depends on tyrosine 1452, which acts as the O-(5'-phospho-DNA)-tyrosine intermediate.

This sequence in the N-terminal section; belongs to the DEAD box helicase family. DDVD subfamily. The protein in the C-terminal section; belongs to the type IA topoisomerase family. Monomer. The cofactor is Zn(2+). Requires Mg(2+) as cofactor. Post-translationally, this protein undergoes a protein self splicing that involves a post-translational excision of the intervening region (intein) followed by peptide ligation.

It is found in the cytoplasm. It carries out the reaction ATP + H2O = ADP + phosphate + H(+). Functionally, modifies the topological state of DNA by introducing positive supercoils in an ATP-dependent process, increasing the linking number in steps of +1. Binds to single-stranded DNA, transiently cleaves and then rejoins the ends, introducing a positive supercoil in the process. The scissile phosphodiester is attacked by the catalytic tyrosine of the enzyme, resulting in the formation of a DNA-(5'-phosphotyrosyl)-enzyme intermediate. Probably involved in rewinding DNA strands in regions of the chromosome that have opened up to allow replication, transcription, DNA repair and/or for DNA protection. The protein is Reverse gyrase of Thermococcus kodakarensis (strain ATCC BAA-918 / JCM 12380 / KOD1) (Pyrococcus kodakaraensis (strain KOD1)).